Here is a 337-residue protein sequence, read N- to C-terminus: NADH-quinone oxidoreductase subunit H (337 aa).

Helical transmembrane passes span 9–29 (FAKI…FTYV), 77–97 (FLIA…VIPF), 110–130 (LLYI…AGWA), 154–174 (MGFA…SGIV), 181–201 (FWEW…ISGV), 229–249 (MAFA…SFLA), 274–294 (VPGI…YLWF), and 313–333 (VLIP…YGGV).

It belongs to the complex I subunit 1 family. As to quaternary structure, NDH-1 is composed of 14 different subunits. Subunits NuoA, H, J, K, L, M, N constitute the membrane sector of the complex.

It localises to the cell inner membrane. It carries out the reaction a quinone + NADH + 5 H(+)(in) = a quinol + NAD(+) + 4 H(+)(out). Functionally, NDH-1 shuttles electrons from NADH, via FMN and iron-sulfur (Fe-S) centers, to quinones in the respiratory chain. The immediate electron acceptor for the enzyme in this species is believed to be ubiquinone. Couples the redox reaction to proton translocation (for every two electrons transferred, four hydrogen ions are translocated across the cytoplasmic membrane), and thus conserves the redox energy in a proton gradient. This subunit may bind ubiquinone. In Halorhodospira halophila (strain DSM 244 / SL1) (Ectothiorhodospira halophila (strain DSM 244 / SL1)), this protein is NADH-quinone oxidoreductase subunit H.